We begin with the raw amino-acid sequence, 452 residues long: FERM domain-containing protein 8 (452 aa).

The FERM domain occupies 28 to 374 (MDVIIYLIND…YCIELSQSTE (347 aa)). The span at 373-387 (TESPASDSTPGNSQL) shows a compositional bias: polar residues. Positions 373–395 (TESPASDSTPGNSQLSEKRSKLK) are disordered.

It localises to the cytoplasm. Its subcellular location is the cytosol. The protein localises to the cell membrane. Its function is as follows. Promotes the cell surface stability of RHBDF1 and RHBDF2 and prevents their degradation via the endolysosomal pathway. By acting on RHBDF proteins, involved in ADAM17-mediated ligand shedding. May negatively regulate Wnt signaling. The polypeptide is FERM domain-containing protein 8 (frmd8) (Xenopus laevis (African clawed frog)).